A 289-amino-acid chain; its full sequence is Protease HtpX homolog (289 aa).

2 helical membrane passes run 7–26 and 31–48; these read TAALLAALSGLLIAISYWVI and GLIIGIGLAAVTNLFSWY. Residue His132 participates in Zn(2+) binding. Residue Glu133 is part of the active site. Residue His136 participates in Zn(2+) binding. 2 helical membrane-spanning segments follow: residues 151–171 and 182–202; these read VAGAISFLAQMVSYSLWFGGG and LGVLLTVMLAPLAATIIQLAI. Zn(2+) is bound at residue Glu207.

This sequence belongs to the peptidase M48B family. Zn(2+) serves as cofactor.

The protein resides in the cell inner membrane. The chain is Protease HtpX homolog from Nostoc punctiforme (strain ATCC 29133 / PCC 73102).